The following is a 242-amino-acid chain: Probable transcriptional regulatory protein XAC3151 (242 aa).

The protein belongs to the TACO1 family.

It is found in the cytoplasm. The polypeptide is Probable transcriptional regulatory protein XAC3151 (Xanthomonas axonopodis pv. citri (strain 306)).